Consider the following 576-residue polypeptide: Mycobactin import ATP-binding/permease protein IrtB (576 aa).

The Cytoplasmic segment spans residues 1–25; that stretch reads MIRTLIALVPADKRGTLGLYTVLTV. An ABC transmembrane type-1 domain is found at 19 to 299; the sequence is LYTVLTVLSV…LSELTPAIES (281 aa). Residues 26-46 form a helical membrane-spanning segment; the sequence is LSVVIRAAGTVLLVPLVAALF. The Periplasmic portion of the chain corresponds to 47–52; that stretch reads GDTPQD. The chain crosses the membrane as a helical span at residues 53 to 73; that stretch reads AWPWLGWLTAATAAGWIVDTT. At 74 to 131 the chain is on the cytoplasmic side; it reads TSRLGFDLGFAVLDHTQHDVADRMPNIRLDWLTAENTATARAAIASTGPELVGLVVNL. The next 2 helical transmembrane spans lie at 132-152 and 153-173; these read LTPL…LVAV and SPPL…AMWA. Topologically, residues 174–241 are cytoplasmic; sequence SNRLSRKADT…RLLAMQIPGQ (68 aa). The helical transmembrane segment at 242–262 threads the bilayer; that stretch reads LLFSLASQLALILLAGMATWL. Residues 263–267 lie on the Periplasmic side of the membrane; the sequence is TVRGE. A helical membrane pass occupies residues 268-288; sequence LSVPEAVAMIVVVARYLEPFT. Residues 289–576 are Cytoplasmic-facing; that stretch reads SLSELTPAIE…HEAADWQITH (288 aa). Positions 332-565 constitute an ABC transporter domain; the sequence is IEFDCVTFGY…GGRFDEFWRR (234 aa). Residue 364 to 371 participates in ATP binding; the sequence is GPSGSGKS.

This sequence belongs to the ABC transporter superfamily. Siderophore-Fe(3+) uptake transporter (SIUT) (TC 3.A.1.21) family. Forms a heterodimer with IrtA.

The protein localises to the cell inner membrane. Its function is as follows. Part of the ABC transporter complex IrtAB involved in the import of iron-bound mycobactin (Fe-MBT) and carboxymycobactin (Fe-cMBT). Has a preference for Fe-MBT over Fe-cMBT. Transmembrane domains (TMD) form a pore in the membrane and the ATP-binding domain (NBD) is responsible for energy generation. The protein is Mycobactin import ATP-binding/permease protein IrtB of Mycolicibacterium smegmatis (strain ATCC 700084 / mc(2)155) (Mycobacterium smegmatis).